Reading from the N-terminus, the 775-residue chain is 5-methyltetrahydropteroyltriglutamate--homocysteine methyltransferase (775 aa).

Residues Arg16–Lys19 and Lys115 contribute to the 5-methyltetrahydropteroyltri-L-glutamate site. L-homocysteine contacts are provided by residues Ile435 to Ser437 and Glu488. L-methionine contacts are provided by residues Ile435 to Ser437 and Glu488. Residues Arg519–Cys520 and Trp565 contribute to the 5-methyltetrahydropteroyltri-L-glutamate site. Asp603 is a binding site for L-homocysteine. Residue Asp603 participates in L-methionine binding. Glu609 is a 5-methyltetrahydropteroyltri-L-glutamate binding site. Residues His645, Cys647, and Glu669 each coordinate Zn(2+). His698 serves as the catalytic Proton donor. Cys730 is a Zn(2+) binding site.

This sequence belongs to the vitamin-B12 independent methionine synthase family. Zn(2+) serves as cofactor.

The catalysed reaction is 5-methyltetrahydropteroyltri-L-glutamate + L-homocysteine = tetrahydropteroyltri-L-glutamate + L-methionine. It functions in the pathway amino-acid biosynthesis; L-methionine biosynthesis via de novo pathway; L-methionine from L-homocysteine (MetE route): step 1/1. Functionally, catalyzes the transfer of a methyl group from 5-methyltetrahydrofolate to homocysteine resulting in methionine formation. This is 5-methyltetrahydropteroyltriglutamate--homocysteine methyltransferase from Coxiella burnetii (strain RSA 331 / Henzerling II).